The sequence spans 377 residues: Nitric oxide reductase FlRd-NAD(+) reductase (377 aa).

This sequence belongs to the FAD-dependent oxidoreductase family. FAD is required as a cofactor.

Its subcellular location is the cytoplasm. It carries out the reaction 2 reduced [nitric oxide reductase rubredoxin domain] + NAD(+) + H(+) = 2 oxidized [nitric oxide reductase rubredoxin domain] + NADH. Its pathway is nitrogen metabolism; nitric oxide reduction. Its function is as follows. One of at least two accessory proteins for anaerobic nitric oxide (NO) reductase. Reduces the rubredoxin moiety of NO reductase. This chain is Nitric oxide reductase FlRd-NAD(+) reductase, found in Escherichia coli O7:K1 (strain IAI39 / ExPEC).